The sequence spans 430 residues: MTTIAKILAREILDSRGNPTLEAEVTLDDGSFGRAAVPSGASTGTKEAVELRDGDKTRYLGKGVRHAVDNVNGTIAETLKNFDAADQQGLDRRLIDLDGTENKGRLGANALLGVSLAAAHAVAASRKQPLWQYLSTITESDVALPVPMMNIINGGAHADNNVDFQEFMVLPVGCSSFSEALRAGTEIFYSLKSVLKGHGLSTAVGDEGGFAPDFRSNVEALDTILEAIGKAGYTAGEDILLGLDVASSEFYDNGKYNLVGENKRLTSEQFVDFLADWVAQYPIISIEDGLAEDDWAGWKLLTDRVGKHVQLVGDDLFVTNPKIFKQGIDSGTANAILIKVNQIGTLTETLEAIAMAHAANYASIVSHRSGETEDTTIADIAVATTATQIKTGSLCRSDRVAKYNQLLRIEQALGSDARYAGRDAFVSIKR.

Gln165 contributes to the (2R)-2-phosphoglycerate binding site. The active-site Proton donor is Glu207. Positions 244, 287, and 314 each coordinate Mg(2+). Lys339, Arg368, Ser369, and Lys390 together coordinate (2R)-2-phosphoglycerate. Lys339 acts as the Proton acceptor in catalysis.

Belongs to the enolase family. Component of the RNA degradosome, a multiprotein complex involved in RNA processing and mRNA degradation. It depends on Mg(2+) as a cofactor.

The protein resides in the cytoplasm. It is found in the secreted. Its subcellular location is the cell surface. The enzyme catalyses (2R)-2-phosphoglycerate = phosphoenolpyruvate + H2O. The protein operates within carbohydrate degradation; glycolysis; pyruvate from D-glyceraldehyde 3-phosphate: step 4/5. Its function is as follows. Catalyzes the reversible conversion of 2-phosphoglycerate (2-PG) into phosphoenolpyruvate (PEP). It is essential for the degradation of carbohydrates via glycolysis. The sequence is that of Enolase from Xanthomonas oryzae pv. oryzae (strain MAFF 311018).